Here is a 258-residue protein sequence, read N- to C-terminus: Venom plasminogen activator (258 aa).

An N-terminal signal peptide occupies residues 1–18 (MVLIRVLANLLILQLSYA). Residues 19–24 (QKSSEL) constitute a propeptide that is removed on maturation. In terms of domain architecture, Peptidase S1 spans 25 to 249 (VVGGDECNIN…YTDWIQSIIS (225 aa)). Disulfide bonds link Cys31–Cys163, Cys50–Cys66, Cys98–Cys256, Cys142–Cys210, Cys174–Cys189, and Cys200–Cys225. An N-linked (GlcNAc...) asparagine glycan is attached at Asn44. Residues His65 and Asp110 each act as charge relay system in the active site. The Charge relay system role is filled by Ser204.

Belongs to the peptidase S1 family. Snake venom subfamily. Monomer. In terms of tissue distribution, expressed by the venom gland.

It is found in the secreted. In terms of biological role, snake venom serine protease that activates plasminogen. Shows a preferential cleavage at Arg-|-Xaa instead of Lys-|-Xaa bonds. The polypeptide is Venom plasminogen activator (Agkistrodon piscivorus leucostoma (Western cottonmouth)).